The sequence spans 361 residues: S-adenosylmethionine:tRNA ribosyltransferase-isomerase (361 aa).

It belongs to the QueA family. As to quaternary structure, monomer.

The protein resides in the cytoplasm. It carries out the reaction 7-aminomethyl-7-carbaguanosine(34) in tRNA + S-adenosyl-L-methionine = epoxyqueuosine(34) in tRNA + adenine + L-methionine + 2 H(+). The protein operates within tRNA modification; tRNA-queuosine biosynthesis. Its function is as follows. Transfers and isomerizes the ribose moiety from AdoMet to the 7-aminomethyl group of 7-deazaguanine (preQ1-tRNA) to give epoxyqueuosine (oQ-tRNA). The sequence is that of S-adenosylmethionine:tRNA ribosyltransferase-isomerase from Mesorhizobium japonicum (strain LMG 29417 / CECT 9101 / MAFF 303099) (Mesorhizobium loti (strain MAFF 303099)).